The chain runs to 627 residues: Phosphomethylpyrimidine synthase (627 aa).

Residues 1–24 (MSATQKNNITRLEQLDRQSTQPFP) show a composition bias toward polar residues. Positions 1–29 (MSATQKNNITRLEQLDRQSTQPFPNSRKV) are disordered. Substrate is bound by residues Asn-231, Met-260, Tyr-289, His-325, 345-347 (SRG), 386-389 (DGLR), and Glu-425. A Zn(2+)-binding site is contributed by His-429. Tyr-452 serves as a coordination point for substrate. His-493 is a binding site for Zn(2+). Positions 573, 576, and 581 each coordinate [4Fe-4S] cluster.

The protein belongs to the ThiC family. In terms of assembly, homodimer. It depends on [4Fe-4S] cluster as a cofactor.

It catalyses the reaction 5-amino-1-(5-phospho-beta-D-ribosyl)imidazole + S-adenosyl-L-methionine = 4-amino-2-methyl-5-(phosphooxymethyl)pyrimidine + CO + 5'-deoxyadenosine + formate + L-methionine + 3 H(+). Its pathway is cofactor biosynthesis; thiamine diphosphate biosynthesis. Functionally, catalyzes the synthesis of the hydroxymethylpyrimidine phosphate (HMP-P) moiety of thiamine from aminoimidazole ribotide (AIR) in a radical S-adenosyl-L-methionine (SAM)-dependent reaction. This Pseudomonas aeruginosa (strain UCBPP-PA14) protein is Phosphomethylpyrimidine synthase.